The following is a 142-amino-acid chain: MQRRQQSGFTLIEIMVVVVILGILAALVVPQVMSRPDQAKVTVAKGDIKAIAAALDMYKLDNFAYPSTQQGLEALVKKPTGNPQPKNWNKDGYLKKLPVDPWGNPYQYLAPGTKGPFDLYSLGADGKEGGSDNDADIGNWDN.

Positions methionine 1–glycine 8 are cleaved as a propeptide — leader sequence. Phenylalanine 9 is subject to N-methylphenylalanine. A helical transmembrane segment spans residues phenylalanine 9–valine 29. The tract at residues serine 121 to asparagine 142 is disordered.

The protein belongs to the GSP G family. Type II secretion system is composed of four main components: the outer membrane complex, the inner membrane complex, the cytoplasmic secretion ATPase and the periplasm-spanning pseudopilus. Forms homomultimers. Interacts with pseudopilin tip ternary complex made of XcpX, XcpU, XcpV and XcpW. Interacts with PilA. In terms of processing, cleaved by the prepilin peptidase. Post-translationally, methylated by prepilin peptidase at the amino group of the N-terminal phenylalanine once the leader sequence is cleaved.

It is found in the cell inner membrane. Core component of the type II secretion system required for the energy-dependent secretion of extracellular factors such as proteases and toxins from the periplasm. Pseudopilin (pilin-like) protein that polymerizes to form the pseudopilus. Further polymerization triggers pseudopilus growth. Type II pseudopilus confers increased bacterial adhesive capabilities. This Pseudomonas aeruginosa (strain ATCC 15692 / DSM 22644 / CIP 104116 / JCM 14847 / LMG 12228 / 1C / PRS 101 / PAO1) protein is Type II secretion system core protein G (xcpT).